A 435-amino-acid polypeptide reads, in one-letter code: 3-phosphoshikimate 1-carboxyvinyltransferase (435 aa).

3-phosphoshikimate contacts are provided by Lys22, Ser23, and Arg27. Residue Lys22 coordinates phosphoenolpyruvate. Phosphoenolpyruvate contacts are provided by Gly94 and Arg122. Ser166, Gln168, Asp314, and Lys341 together coordinate 3-phosphoshikimate. Residue Gln168 coordinates phosphoenolpyruvate. Asp314 functions as the Proton acceptor in the catalytic mechanism. Phosphoenolpyruvate contacts are provided by Arg345 and Arg388.

Belongs to the EPSP synthase family. Monomer.

It localises to the cytoplasm. The catalysed reaction is 3-phosphoshikimate + phosphoenolpyruvate = 5-O-(1-carboxyvinyl)-3-phosphoshikimate + phosphate. The protein operates within metabolic intermediate biosynthesis; chorismate biosynthesis; chorismate from D-erythrose 4-phosphate and phosphoenolpyruvate: step 6/7. In terms of biological role, catalyzes the transfer of the enolpyruvyl moiety of phosphoenolpyruvate (PEP) to the 5-hydroxyl of shikimate-3-phosphate (S3P) to produce enolpyruvyl shikimate-3-phosphate and inorganic phosphate. The protein is 3-phosphoshikimate 1-carboxyvinyltransferase of Ruthia magnifica subsp. Calyptogena magnifica.